Reading from the N-terminus, the 529-residue chain is DEP domain-containing protein 1B (529 aa).

The DEP domain maps to F24–P108. S160 is modified (phosphoserine). One can recognise a Rho-GAP domain in the interval D201–L393. S436 carries the post-translational modification Phosphoserine.

This chain is DEP domain-containing protein 1B (Depdc1b), found in Mus musculus (Mouse).